A 310-amino-acid chain; its full sequence is uncharacterized protein (310 aa).

The disordered stretch occupies residues 1-70; that stretch reads MAGNSQRRGA…ARGRTDETET (70 aa). Residues 49–62 are compositionally biased toward basic residues; sequence AAKRAKAQQRRPAR. Positions 262, 282, and 291 each coordinate S-adenosyl-L-methionine.

Belongs to the class IV-like SAM-binding methyltransferase superfamily. RNA methyltransferase TrmH family.

This is an uncharacterized protein from Mycobacterium marinum (strain ATCC BAA-535 / M).